The sequence spans 338 residues: Solute carrier family 35 member G3 (338 aa).

A disordered region spans residues 1 to 24 (MAGSHPYFNQPDSTHPSPPSAPPS). Helical transmembrane passes span 37 to 57 (TSGL…VGPL), 67 to 87 (LPSL…ALLL), 105 to 125 (FFCA…VQVV), 160 to 180 (CGLL…LWTL), 185 to 205 (TGVY…ALSL), 221 to 241 (TVAF…LFVL), 250 to 270 (LLSW…FTCV), 281 to 301 (LVCA…YYML), and 305 to 325 (VAPS…IITA). The 126-residue stretch at 49 to 174 (LPAGFVGPLS…CILGLIIIVG (126 aa)) folds into the EamA 1 domain. Positions 272-325 (YAVTKAHPALVCAVLHSEVVVALILQYYMLHETVAPSDIVAAGVVLGSIAIITA) constitute an EamA 2 domain.

This sequence belongs to the SLC35G solute transporter family. Expressed in testis.

It localises to the membrane. This Homo sapiens (Human) protein is Solute carrier family 35 member G3 (SLC35G3).